Consider the following 323-residue polypeptide: Delta-aminolevulinic acid dehydratase (323 aa).

3 residues coordinate Zn(2+): Cys118, Cys120, and Cys128. The active-site Schiff-base intermediate with substrate is Lys193. The 5-aminolevulinate site is built by Arg203 and Arg215. A Mg(2+)-binding site is contributed by Glu231. The Schiff-base intermediate with substrate role is filled by Lys246. 5-aminolevulinate is bound by residues Ser272 and Tyr311.

This sequence belongs to the ALAD family. As to quaternary structure, homooctamer. Zn(2+) is required as a cofactor.

The enzyme catalyses 2 5-aminolevulinate = porphobilinogen + 2 H2O + H(+). It functions in the pathway porphyrin-containing compound metabolism; protoporphyrin-IX biosynthesis; coproporphyrinogen-III from 5-aminolevulinate: step 1/4. In terms of biological role, catalyzes an early step in the biosynthesis of tetrapyrroles. Binds two molecules of 5-aminolevulinate per subunit, each at a distinct site, and catalyzes their condensation to form porphobilinogen. The protein is Delta-aminolevulinic acid dehydratase (hemB) of Helicobacter pylori (strain J99 / ATCC 700824) (Campylobacter pylori J99).